The sequence spans 347 residues: E3 ubiquitin-protein ligase RNF146-B (347 aa).

The segment at 37 to 75 adopts an RING-type zinc-finger fold; that stretch reads CAICLQTCVHPVSLPCKHVFCYLCVKGASWLGKRCALCR. Residues Lys-85, Lys-95, Lys-131, and Lys-176 each participate in a glycyl lysine isopeptide (Lys-Gly) (interchain with G-Cter in ubiquitin) cross-link. Residues 92-168 form the WWE domain; sequence EELKAASRGN…EHGRRRKIKR (77 aa). Disordered stretches follow at residues 196–241 and 257–347; these read SSAD…GTSL and ERSH…VTEV. Residues 203 to 217 are compositionally biased toward low complexity; that stretch reads SVPAQSGASVQSSSV. The segment covering 282–296 has biased composition (acidic residues); the sequence is SIEETESDASSDSED. 2 positions are modified to phosphoserine: Ser-288 and Ser-292. The segment covering 304 to 322 has biased composition (polar residues); that stretch reads HSLTQQRLLVPNPSQTVSD.

Interacts with poly-ADP-ribosylated AXIN1, AXIN2, BLZF1 and CASC3. Ubiquitinated; autoubiquitinated. Autoubiquitination is enhanced upon poly(ADP-ribose)-binding.

The protein localises to the cytoplasm. It localises to the cytosol. It catalyses the reaction S-ubiquitinyl-[E2 ubiquitin-conjugating enzyme]-L-cysteine + [acceptor protein]-L-lysine = [E2 ubiquitin-conjugating enzyme]-L-cysteine + N(6)-ubiquitinyl-[acceptor protein]-L-lysine.. It functions in the pathway protein modification; protein ubiquitination. Functionally, E3 ubiquitin-protein ligase that specifically binds poly-ADP-ribosylated proteins and mediates their ubiquitination and subsequent degradation. Acts as an activator of the Wnt signaling pathway by mediating the ubiquitination of poly-ADP-ribosylated AXIN1 and AXIN2, 2 key components of the beta-catenin destruction complex. Acts in cooperation with tankyrase proteins (TNKS and TNKS2), which mediate poly-ADP-ribosylation of target proteins AXIN1, AXIN2, BLZF1, CASC3, TNKS and TNKS2. Recognizes and binds tankyrase-dependent poly-ADP-ribosylated proteins via its WWE domain and mediates their ubiquitination. This chain is E3 ubiquitin-protein ligase RNF146-B (RNF146B), found in Bos taurus (Bovine).